Consider the following 155-residue polypeptide: Large ribosomal subunit protein uL11 (155 aa).

Belongs to the universal ribosomal protein uL11 family. As to quaternary structure, part of the ribosomal stalk of the 50S ribosomal subunit. Interacts with L10 and the large rRNA to form the base of the stalk. L10 forms an elongated spine to which L12 dimers bind in a sequential fashion forming a multimeric L10(L12)X complex.

Its function is as follows. Forms part of the ribosomal stalk which helps the ribosome interact with GTP-bound translation factors. The sequence is that of Large ribosomal subunit protein uL11 from Picrophilus torridus (strain ATCC 700027 / DSM 9790 / JCM 10055 / NBRC 100828 / KAW 2/3).